The chain runs to 476 residues: Cysteine--tRNA ligase (476 aa).

Cysteine 36 lines the Zn(2+) pocket. The 'HIGH' region motif lies at proline 38–asparagine 48. Zn(2+) is bound by residues cysteine 221, histidine 246, and glutamate 250. Positions lysine 278–serine 282 match the 'KMSKS' region motif. Lysine 281 provides a ligand contact to ATP.

The protein belongs to the class-I aminoacyl-tRNA synthetase family. As to quaternary structure, monomer. It depends on Zn(2+) as a cofactor.

The protein resides in the cytoplasm. It carries out the reaction tRNA(Cys) + L-cysteine + ATP = L-cysteinyl-tRNA(Cys) + AMP + diphosphate. This Chlamydia caviae (strain ATCC VR-813 / DSM 19441 / 03DC25 / GPIC) (Chlamydophila caviae) protein is Cysteine--tRNA ligase.